The following is an 82-amino-acid chain: Host transcription reprogramming factor 10 (82 aa).

An N-terminal signal peptide occupies residues 1 to 19 (MQIFNMVSLVALFALGATA). The C2H2-type zinc finger occupies 57-81 (WVCHACNKQFTTPAALQKHKDTVVH).

It localises to the secreted. It is found in the host nucleus. Its function is as follows. Probable secreted effector that translocates into the nuclei of host cells to reprogram the expression of targeted genes by binding on effector binding elements in rice. This is Host transcription reprogramming factor 10 from Pyricularia oryzae (strain 70-15 / ATCC MYA-4617 / FGSC 8958) (Rice blast fungus).